The following is a 262-amino-acid chain: MRFWGKFFGFVIGFMFGRFFGALLGLWLGHLYDKRPGGGASFSQILGQAKNRQGIFFNTTFAVMGHVAKASGRVTETDIRIATLLMDQMRLTGDARKEAQQAFREGKEPDFDLCSSLQAFRAVTQGRQELVQMFIEIQIQTALSDGELDAAEHAILMTVAQELGYGRQQLDELLKRWQAEFRFHQTSSGNKTSITDAYHLLGITAEATDQEVKRAYRKLMNEHHPDKLVAKGLPPEMMEIANRKAQDIQAAYDRVKSERGMR.

Residues 1-6 (MRFWGK) are Periplasmic-facing. The chain crosses the membrane as a helical span at residues 7–30 (FFGFVIGFMFGRFFGALLGLWLGH). Residues 31–262 (LYDKRPGGGA…DRVKSERGMR (232 aa)) lie on the Cytoplasmic side of the membrane. Residues 196-262 (DAYHLLGITA…DRVKSERGMR (67 aa)) enclose the J domain.

As to quaternary structure, homodimer.

The protein resides in the cell inner membrane. Regulatory DnaK co-chaperone. Direct interaction between DnaK and DjlA is needed for the induction of the wcaABCDE operon, involved in the synthesis of a colanic acid polysaccharide capsule, possibly through activation of the RcsB/RcsC phosphotransfer signaling pathway. The colanic acid capsule may help the bacterium survive conditions outside the host. This chain is Co-chaperone protein DjlA, found in Shewanella oneidensis (strain ATCC 700550 / JCM 31522 / CIP 106686 / LMG 19005 / NCIMB 14063 / MR-1).